We begin with the raw amino-acid sequence, 265 residues long: MICOS complex subunit Mic27 (265 aa).

The transit peptide at 1-27 (MAAFRMGKLTTIPAGLIYASINVRLAK) directs the protein to the mitochondrion. Over 28-110 (EEEPKKQLVR…YVYLKNPPQD (83 aa)) the chain is Mitochondrial intermembrane. Residues 111–129 (FLPKMGVITASGLAGLLSA) traverse the membrane as a helical segment. Over 130–137 (RKGSRFKK) the chain is Mitochondrial matrix. The helical transmembrane segment at 138 to 155 (IAYPLGLATLGATVCYPA) threads the bilayer. Residues 156 to 265 (QSVIIAKITG…DDKDMYSTRS (110 aa)) are Mitochondrial intermembrane-facing. Disordered stretches follow at residues 187 to 215 (SENESLPEPKEESKEGRSDEIHASLPDLK) and 229 to 265 (VIKSESTSGTTQFIPDPKLMDHGQSHPDDKDMYSTRS). Serine 204 carries the post-translational modification Phosphoserine. Positions 229 to 241 (VIKSESTSGTTQF) are enriched in polar residues. Residues 246 to 265 (KLMDHGQSHPDDKDMYSTRS) are compositionally biased toward basic and acidic residues.

It belongs to the apolipoprotein O/MICOS complex subunit Mic27 family. As to quaternary structure, component of the mitochondrial contact site and cristae organizing system (MICOS) complex, composed of at least MICOS10/MIC10, CHCHD3/MIC19, CHCHD6/MIC25, APOOL/MIC27, IMMT/MIC60, APOO/MIC23/MIC26 and MICOS13/MIC13. This complex was also known under the names MINOS or MitOS complex. The MICOS complex associates with mitochondrial outer membrane proteins SAMM50, MTX1 and MTX2 (together described as components of the mitochondrial outer membrane sorting assembly machinery (SAM) complex) and DNAJC11, mitochondrial inner membrane protein TMEM11 and with HSPA9. The MICOS and SAM complexes together with DNAJC11 are part of a large protein complex spanning both membranes termed the mitochondrial intermembrane space bridging (MIB) complex. Interacts with MICOS10/MIC10, IMMT/MIC60 and APOO/MIC23/MIC26.

It localises to the mitochondrion inner membrane. The protein localises to the mitochondrion. Its function is as follows. Component of the MICOS complex, a large protein complex of the mitochondrial inner membrane that plays crucial roles in the maintenance of crista junctions, inner membrane architecture, and formation of contact sites to the outer membrane. Specifically binds to cardiolipin (in vitro) but not to the precursor lipid phosphatidylglycerol. Plays a crucial role in crista junction formation and mitochondrial function. This Mus musculus (Mouse) protein is MICOS complex subunit Mic27 (Apool).